We begin with the raw amino-acid sequence, 125 residues long: MSNLLKEFNEQQIKLLSNREIPKFKSGDTLRVTMKIFDSAGERIQTFEGVCIKKRNNGLHSSFTLRKISYNESIQLQIFLYSPTIESIEVVKFGKVRRAKLYYMLSLFGKSARIKERIDRSKKSS.

Belongs to the bacterial ribosomal protein bL19 family.

Its function is as follows. This protein is located at the 30S-50S ribosomal subunit interface and may play a role in the structure and function of the aminoacyl-tRNA binding site. The sequence is that of Large ribosomal subunit protein bL19 from Ehrlichia ruminantium (strain Gardel).